The sequence spans 428 residues: Flotillin-2 (428 aa).

The N-myristoyl glycine moiety is linked to residue Gly2. Residue Cys4 is the site of S-palmitoyl cysteine; by ZDHHC5 attachment. The S-palmitoyl cysteine moiety is linked to residue Cys19. Cys20 carries the S-palmitoyl cysteine; by ZDHHC5 lipid modification. Position 405 is a phosphoserine (Ser405).

Belongs to the band 7/mec-2 family. Flotillin subfamily. In terms of assembly, heterooligomeric complex of flotillin-1 and flotillin-2 and caveolin-1 and caveolin-2. Interacts with ECPAS. In terms of processing, ZDHHC5-catalyzed palmitoylation may be required for the formation of higher-order complexes and for neurite outgrowth in cultured neural stem cells.

The protein resides in the cell membrane. It is found in the membrane. The protein localises to the caveola. Its subcellular location is the endosome. May act as a scaffolding protein within caveolar membranes, functionally participating in formation of caveolae or caveolae-like vesicles. May be involved in epidermal cell adhesion and epidermal structure and function. The chain is Flotillin-2 (FLOT2) from Bos taurus (Bovine).